A 141-amino-acid chain; its full sequence is Vesicle-associated membrane protein 4 (141 aa).

The interval 1 to 51 (MPPKFKRHLNDDDVTGSVKSERRNLLEDDSDEEEDFFLRGPSGPRFGPRND) is disordered. Topologically, residues 1-118 (MPPKFKRHLN…MWWRGCKIKA (118 aa)) are cytoplasmic. A phosphoserine mark is found at serine 17 and serine 30. The v-SNARE coiled-coil homology domain maps to 52 to 112 (KIKHVQNQVD…KQLRRQMWWR (61 aa)). The chain crosses the membrane as a helical; Anchor for type IV membrane protein span at residues 119–139 (IMALAAAILLLMIIILIVVKF). The Vesicular segment spans residues 140–141 (RT).

The protein belongs to the synaptobrevin family. Identified in a complex containing STX6, STX12, VAMP4 and VTI1A. Interacts with BAIAP3; this interaction is increased in the presence of calcium. In terms of processing, (Microbial infection) Targeted and hydrolyzed by C.botulinum neurotoxin type X (BoNT/X) which hydrolyzes the 87-Arg-|-Ser-88 bond and probably inhibits neurotransmitter release. It remains unknown whether BoNT/X is ever produced, or what organisms it targets.

It is found in the golgi apparatus. Its subcellular location is the trans-Golgi network membrane. In terms of biological role, involved in the pathway that functions to remove an inhibitor (probably synaptotagmin-4) of calcium-triggered exocytosis during the maturation of secretory granules. May be a marker for this sorting pathway that is critical for remodeling the secretory response of granule. This is Vesicle-associated membrane protein 4 (Vamp4) from Mus musculus (Mouse).